Reading from the N-terminus, the 510-residue chain is Maturase K (510 aa).

This sequence belongs to the intron maturase 2 family. MatK subfamily.

The protein localises to the plastid. Its function is as follows. Usually encoded in the trnK tRNA gene intron. Probably assists in splicing its own and other chloroplast group II introns. The chain is Maturase K from Aneura mirabilis (Parasitic liverwort).